A 66-amino-acid chain; its full sequence is Beta-defensin 134 (66 aa).

Residues 1–19 form the signal peptide; that stretch reads MKPLLVVFVFLFLWDPVLA. Cystine bridges form between Cys-32/Cys-58, Cys-38/Cys-52, and Cys-42/Cys-59.

The protein belongs to the beta-defensin family.

It localises to the secreted. In terms of biological role, has antibacterial activity. The polypeptide is Beta-defensin 134 (DEFB134) (Homo sapiens (Human)).